Here is a 170-residue protein sequence, read N- to C-terminus: Myosin regulatory light chain 1 (170 aa).

Basic residues predominate over residues 1-13 (MSKAAKKKSSKKR). The segment at 1–22 (MSKAAKKKSSKKRSGSEAAQFD) is disordered. EF-hand domains lie at 24–59 (KTIQEFKEAFGIMDQNKDGIIDKSDLKDLYASMGQI) and 93–128 (DPEATIIGAFAMFDKKDCGKIKEDDLIKILQNKRGE). Residues D37, N39, D41, and D48 each contribute to the Ca(2+) site.

As to quaternary structure, myosin is a hexamer of 2 heavy chains and 4 light chains (two regulatory light chains and two essential light chains).

The chain is Myosin regulatory light chain 1 (mlc-1) from Caenorhabditis elegans.